A 505-amino-acid chain; its full sequence is Maturase K (505 aa).

It belongs to the intron maturase 2 family. MatK subfamily.

The protein localises to the plastid. It localises to the chloroplast. Functionally, usually encoded in the trnK tRNA gene intron. Probably assists in splicing its own and other chloroplast group II introns. This Coffea arabica (Arabian coffee) protein is Maturase K.